The following is a 116-amino-acid chain: Large ribosomal subunit protein bL19 (116 aa).

It belongs to the bacterial ribosomal protein bL19 family.

Functionally, this protein is located at the 30S-50S ribosomal subunit interface and may play a role in the structure and function of the aminoacyl-tRNA binding site. This Pseudomonas entomophila (strain L48) protein is Large ribosomal subunit protein bL19.